A 241-amino-acid chain; its full sequence is Triosephosphate isomerase (241 aa).

Residue 9-11 participates in substrate binding; sequence NWK. Residue H96 is the Electrophile of the active site. E165 functions as the Proton acceptor in the catalytic mechanism. Substrate is bound by residues G171, S204, and 225–226; that span reads GG.

This sequence belongs to the triosephosphate isomerase family. In terms of assembly, homodimer.

The protein localises to the cytoplasm. The catalysed reaction is D-glyceraldehyde 3-phosphate = dihydroxyacetone phosphate. The protein operates within carbohydrate biosynthesis; gluconeogenesis. It functions in the pathway carbohydrate degradation; glycolysis; D-glyceraldehyde 3-phosphate from glycerone phosphate: step 1/1. Functionally, involved in the gluconeogenesis. Catalyzes stereospecifically the conversion of dihydroxyacetone phosphate (DHAP) to D-glyceraldehyde-3-phosphate (G3P). In Prochlorococcus marinus subsp. pastoris (strain CCMP1986 / NIES-2087 / MED4), this protein is Triosephosphate isomerase.